Reading from the N-terminus, the 298-residue chain is Tyrosine recombinase XerC (298 aa).

A Core-binding (CB) domain is found at 1–84 (MNHIQEAFLN…TLRTFYEYWM (84 aa)). A Tyr recombinase domain is found at 105–286 (YLPQFFYEEE…SNQQLRKVYL (182 aa)). Residues R145, K169, H238, R241, and H264 contribute to the active site. Y273 (O-(3'-phospho-DNA)-tyrosine intermediate) is an active-site residue.

It belongs to the 'phage' integrase family. XerC subfamily. Forms a cyclic heterotetrameric complex composed of two molecules of XerC and two molecules of XerD.

Its subcellular location is the cytoplasm. In terms of biological role, site-specific tyrosine recombinase, which acts by catalyzing the cutting and rejoining of the recombining DNA molecules. The XerC-XerD complex is essential to convert dimers of the bacterial chromosome into monomers to permit their segregation at cell division. It also contributes to the segregational stability of plasmids. The polypeptide is Tyrosine recombinase XerC (Staphylococcus aureus (strain bovine RF122 / ET3-1)).